Reading from the N-terminus, the 608-residue chain is Nuclear protein localization protein 4 homolog (608 aa).

Residue Ala-2 is modified to N-acetylalanine. N6-acetyllysine is present on Lys-179. The MPN domain occupies 226–363 (IMFENHTVAD…MCRLSPDGHF (138 aa)). Residues 580–608 (TAAMWACQHCTFMNQPGTGHCEMCSLPRT) form a RanBP2-type zinc finger.

It belongs to the NPL4 family. As to quaternary structure, heterodimer with UFD1. The heterodimer binds ubiquitinated proteins. The heterodimer binds to VCP and inhibits Golgi membrane fusion. Interacts with ZFAND2B; probably through VCP. As to expression, expressed at highest levels in brain, heart, skeletal muscle, kidney and fetal liver.

The protein localises to the cytoplasm. Its subcellular location is the cytosol. The protein resides in the endoplasmic reticulum. It is found in the nucleus. It participates in protein degradation; proteasomal ubiquitin-dependent pathway. Its function is as follows. The ternary complex containing UFD1, VCP and NPLOC4 binds ubiquitinated proteins and is necessary for the export of misfolded proteins from the ER to the cytoplasm, where they are degraded by the proteasome. The NPLOC4-UFD1-VCP complex regulates spindle disassembly at the end of mitosis and is necessary for the formation of a closed nuclear envelope. Acts as a negative regulator of type I interferon production via the complex formed with VCP and UFD1, which binds to RIGI and recruits RNF125 to promote ubiquitination and degradation of RIGI. This chain is Nuclear protein localization protein 4 homolog (NPLOC4), found in Homo sapiens (Human).